Here is a 435-residue protein sequence, read N- to C-terminus: GTPase Obg (435 aa).

Residues methionine 1–isoleucine 159 form the Obg domain. The 170-residue stretch at alanine 160–phenylalanine 329 folds into the OBG-type G domain. GTP-binding positions include glycine 166–serine 173, phenylalanine 191–asparagine 195, aspartate 212–glycine 215, asparagine 282–aspartate 285, and serine 310–leucine 312. Residues serine 173 and threonine 193 each contribute to the Mg(2+) site. In terms of domain architecture, OCT spans threonine 355–glutamate 435.

It belongs to the TRAFAC class OBG-HflX-like GTPase superfamily. OBG GTPase family. As to quaternary structure, monomer. Mg(2+) serves as cofactor.

The protein resides in the cytoplasm. Its function is as follows. An essential GTPase which binds GTP, GDP and possibly (p)ppGpp with moderate affinity, with high nucleotide exchange rates and a fairly low GTP hydrolysis rate. Plays a role in control of the cell cycle, stress response, ribosome biogenesis and in those bacteria that undergo differentiation, in morphogenesis control. The polypeptide is GTPase Obg (Ureaplasma urealyticum serovar 10 (strain ATCC 33699 / Western)).